We begin with the raw amino-acid sequence, 682 residues long: Beta-galactosidase (682 aa).

Residues 1–23 (MPGFLVRILPLLLPLLLLGPTRG) form the signal peptide. A propeptide spanning residues 24–28 (LRNAT) is cleaved from the precursor. The N-linked (GlcNAc...) asparagine glycan is linked to N26. The substrate site is built by Y83, E129, and N187. The Proton donor role is filled by E188. A disulfide bridge links C195 with C230. An N-linked (GlcNAc...) asparagine glycan is attached at N247. Catalysis depends on E268, which acts as the Nucleophile. Y333 contacts substrate. N-linked (GlcNAc...) asparagine glycans are attached at residues N464, N498, N545, and N555. C626 and C634 are disulfide-bonded.

Belongs to the glycosyl hydrolase 35 family. Homodimer. May form higher multimers.

Its subcellular location is the lysosome. It carries out the reaction Hydrolysis of terminal non-reducing beta-D-galactose residues in beta-D-galactosides.. Its function is as follows. Cleaves beta-linked terminal galactosyl residues from gangliosides, glycoproteins, and glycosaminoglycans. This is Beta-galactosidase (GLB1) from Macaca fascicularis (Crab-eating macaque).